The chain runs to 108 residues: MNLNIETITHDDFYEVKVGGELDVYTVPELEEVLVPMRQEGTHDVHVNLANVSYMDSTGLGLFVGTLKALNQNDKNLYILGVSERIGRLFDITGLKDLMHVNEGTEVE.

An STAS domain is found at 3–108; that stretch reads LNIETITHDD…MHVNEGTEVE (106 aa). A Phosphoserine modification is found at Ser57.

This sequence belongs to the anti-sigma-factor antagonist family. Post-translationally, phosphorylated by RsbW on a serine residue.

In terms of biological role, positive regulator of sigma-B activity. Non-phosphorylated RsbV binds to RsbW, preventing its association with sigma-B. When phosphorylated, releases RsbW, which is then free to complex with and inactivate sigma-B. The sequence is that of Anti-sigma-B factor antagonist (rsbV) from Staphylococcus epidermidis.